The chain runs to 203 residues: Recombination protein RecR (203 aa).

The C4-type zinc finger occupies 56 to 71 (CAVCGNVSDDERCRIC). The Toprim domain occupies 79–179 (SVVCVVEEPK…TVTRIASGLP (101 aa)).

This sequence belongs to the RecR family.

Its function is as follows. May play a role in DNA repair. It seems to be involved in an RecBC-independent recombinational process of DNA repair. It may act with RecF and RecO. In Mycobacterium avium (strain 104), this protein is Recombination protein RecR.